A 154-amino-acid polypeptide reads, in one-letter code: Thioredoxin-like protein CXXS2 (154 aa).

The 126-residue stretch at 23-148 folds into the Thioredoxin domain; the sequence is RRNKTQARSQ…LQKKTAAAAN (126 aa). S31 carries the post-translational modification Phosphoserine.

Belongs to the thioredoxin family. As to expression, ubiquitous.

It localises to the cytoplasm. In terms of biological role, possesses low disulfide reductase activity, but efficient protein disulfide isomerase activity. Does not possess deglutathionylation activity. The protein is Thioredoxin-like protein CXXS2 (CXXS2) of Arabidopsis thaliana (Mouse-ear cress).